Consider the following 281-residue polypeptide: Ribosomal protein L11 methyltransferase (281 aa).

Thr133, Gly154, Asp175, and Asn216 together coordinate S-adenosyl-L-methionine.

The protein belongs to the methyltransferase superfamily. PrmA family.

The protein resides in the cytoplasm. It carries out the reaction L-lysyl-[protein] + 3 S-adenosyl-L-methionine = N(6),N(6),N(6)-trimethyl-L-lysyl-[protein] + 3 S-adenosyl-L-homocysteine + 3 H(+). In terms of biological role, methylates ribosomal protein L11. In Campylobacter jejuni subsp. jejuni serotype O:23/36 (strain 81-176), this protein is Ribosomal protein L11 methyltransferase.